Consider the following 547-residue polypeptide: Chaperonin GroEL (547 aa).

ATP-binding positions include 30–33 (TLGP), Lys51, 87–91 (DGTTT), Gly415, and Asp496. The tract at residues 527 to 547 (ENTPDMPAMPPGGMGGMGGMY) is disordered. The segment covering 538 to 547 (GGMGGMGGMY) has biased composition (gly residues).

This sequence belongs to the chaperonin (HSP60) family. As to quaternary structure, forms a cylinder of 14 subunits composed of two heptameric rings stacked back-to-back. Interacts with the co-chaperonin GroES.

It localises to the cytoplasm. It catalyses the reaction ATP + H2O + a folded polypeptide = ADP + phosphate + an unfolded polypeptide.. Its function is as follows. Together with its co-chaperonin GroES, plays an essential role in assisting protein folding. The GroEL-GroES system forms a nano-cage that allows encapsulation of the non-native substrate proteins and provides a physical environment optimized to promote and accelerate protein folding. This is Chaperonin GroEL from Chlorobium phaeovibrioides (strain DSM 265 / 1930) (Prosthecochloris vibrioformis (strain DSM 265)).